The chain runs to 556 residues: Olefin beta-lactone synthetase (556 aa).

ATP contacts are provided by residues 187–195, 321–326, Asp430, and Arg445; these read TSGSTGVPK and TPYGAT.

The protein belongs to the ATP-dependent AMP-binding enzyme family. Monomer. Forms a complex with OleB and OleD.

The protein localises to the cytoplasm. The catalysed reaction is a (2R,3S)-2-alkyl-3-hydroxyalkanoate + ATP = a cis-3-alkyl-4-alkyloxetan-2-one + AMP + diphosphate. Involved in olefin biosynthesis. Catalyzes the conversion of 2-alkyl-3-hydroxyalkanoic acids to beta-lactones in the presence of ATP. The polypeptide is Olefin beta-lactone synthetase (Xanthomonas campestris pv. campestris (strain ATCC 33913 / DSM 3586 / NCPPB 528 / LMG 568 / P 25)).